Reading from the N-terminus, the 454-residue chain is Probable N-octanoylanthranilate hydrolase AqdA2 (454 aa).

Ser-185 serves as the catalytic Acyl-ester intermediate. Residues Glu-306 and His-379 each act as charge relay system in the active site.

The protein belongs to the type-B carboxylesterase/lipase family.

The catalysed reaction is N-octanoylanthranilate + H2O = anthranilate + octanoate + H(+). Involved in the degradation of the Pseudomonas aeruginosa quorum sensing signal molecules HHQ (2-heptyl-4-quinolone) and PQS (2-heptyl-3-hydroxy-4-quinolone) to anthranilic acid. Probably catalyzes the hydrolysis of N-octanoylanthranilic acid to anthranilic acid. In Rhodococcus erythropolis (Arthrobacter picolinophilus), this protein is Probable N-octanoylanthranilate hydrolase AqdA2.